Consider the following 481-residue polypeptide: Alkaline protease secretion protein AprF (481 aa).

The segment at 462–481 (PAPLHTLSKTDTEENRSALN) is disordered. Residues 469–481 (SKTDTEENRSALN) show a composition bias toward basic and acidic residues.

Belongs to the outer membrane factor (OMF) (TC 1.B.17) family.

The protein resides in the cell outer membrane. Involved in the secretion of alkaline protease. In Pseudomonas aeruginosa (strain ATCC 15692 / DSM 22644 / CIP 104116 / JCM 14847 / LMG 12228 / 1C / PRS 101 / PAO1), this protein is Alkaline protease secretion protein AprF (aprF).